A 344-amino-acid polypeptide reads, in one-letter code: GTP 3',8-cyclase (344 aa).

Positions proline 19–alanine 245 constitute a Radical SAM core domain. GTP is bound at residue arginine 28. The [4Fe-4S] cluster site is built by cysteine 35 and cysteine 39. Residue tyrosine 41 participates in S-adenosyl-L-methionine binding. Position 42 (cysteine 42) interacts with [4Fe-4S] cluster. Arginine 77 contacts GTP. Residue glycine 81 participates in S-adenosyl-L-methionine binding. Residue threonine 111 participates in GTP binding. Serine 135 contacts S-adenosyl-L-methionine. Lysine 171 is a GTP binding site. Residue methionine 205 participates in S-adenosyl-L-methionine binding. Residues cysteine 268 and cysteine 271 each coordinate [4Fe-4S] cluster. GTP is bound at residue arginine 273–arginine 275. Cysteine 285 is a [4Fe-4S] cluster binding site.

It belongs to the radical SAM superfamily. MoaA family. As to quaternary structure, monomer and homodimer. Requires [4Fe-4S] cluster as cofactor.

It carries out the reaction GTP + AH2 + S-adenosyl-L-methionine = (8S)-3',8-cyclo-7,8-dihydroguanosine 5'-triphosphate + 5'-deoxyadenosine + L-methionine + A + H(+). The protein operates within cofactor biosynthesis; molybdopterin biosynthesis. In terms of biological role, catalyzes the cyclization of GTP to (8S)-3',8-cyclo-7,8-dihydroguanosine 5'-triphosphate. In Brucella melitensis biotype 2 (strain ATCC 23457), this protein is GTP 3',8-cyclase.